Here is a 439-residue protein sequence, read N- to C-terminus: Arginine biosynthesis bifunctional protein ArgJ, mitochondrial (439 aa).

The substrate site is built by threonine 175, lysine 201, threonine 212, glutamate 301, asparagine 434, and serine 439. Threonine 212 acts as the Nucleophile in catalysis.

This sequence belongs to the ArgJ family. Heterodimer of an alpha and a beta chain. In terms of processing, the alpha and beta chains are autoproteolytically processed from a single precursor protein within the mitochondrion.

The protein resides in the mitochondrion matrix. The catalysed reaction is N(2)-acetyl-L-ornithine + L-glutamate = N-acetyl-L-glutamate + L-ornithine. It carries out the reaction L-glutamate + acetyl-CoA = N-acetyl-L-glutamate + CoA + H(+). The protein operates within amino-acid biosynthesis; L-arginine biosynthesis; L-ornithine and N-acetyl-L-glutamate from L-glutamate and N(2)-acetyl-L-ornithine (cyclic): step 1/1. It functions in the pathway amino-acid biosynthesis; L-arginine biosynthesis; N(2)-acetyl-L-ornithine from L-glutamate: step 1/4. Functionally, catalyzes two activities which are involved in the cyclic version of arginine biosynthesis: the synthesis of acetylglutamate from glutamate and acetyl-CoA, and of ornithine by transacetylation between acetylornithine and glutamate. In Candida albicans (strain WO-1) (Yeast), this protein is Arginine biosynthesis bifunctional protein ArgJ, mitochondrial.